The primary structure comprises 251 residues: 2-C-methyl-D-erythritol 4-phosphate cytidylyltransferase (251 aa).

Belongs to the IspD/TarI cytidylyltransferase family. IspD subfamily.

It catalyses the reaction 2-C-methyl-D-erythritol 4-phosphate + CTP + H(+) = 4-CDP-2-C-methyl-D-erythritol + diphosphate. It participates in isoprenoid biosynthesis; isopentenyl diphosphate biosynthesis via DXP pathway; isopentenyl diphosphate from 1-deoxy-D-xylulose 5-phosphate: step 2/6. Catalyzes the formation of 4-diphosphocytidyl-2-C-methyl-D-erythritol from CTP and 2-C-methyl-D-erythritol 4-phosphate (MEP). This chain is 2-C-methyl-D-erythritol 4-phosphate cytidylyltransferase, found in Cupriavidus pinatubonensis (strain JMP 134 / LMG 1197) (Cupriavidus necator (strain JMP 134)).